The sequence spans 235 residues: Thiamine-phosphate synthase (235 aa).

4-amino-2-methyl-5-(diphosphooxymethyl)pyrimidine-binding positions include 50–54 (QLRDK) and Asn91. Residues Asp92 and Asp111 each contribute to the Mg(2+) site. Ser130 provides a ligand contact to 4-amino-2-methyl-5-(diphosphooxymethyl)pyrimidine. Residue 160 to 162 (TPT) participates in 2-[(2R,5Z)-2-carboxy-4-methylthiazol-5(2H)-ylidene]ethyl phosphate binding. A 4-amino-2-methyl-5-(diphosphooxymethyl)pyrimidine-binding site is contributed by Lys163. Gly191 contacts 2-[(2R,5Z)-2-carboxy-4-methylthiazol-5(2H)-ylidene]ethyl phosphate.

The protein belongs to the thiamine-phosphate synthase family. It depends on Mg(2+) as a cofactor.

It catalyses the reaction 2-[(2R,5Z)-2-carboxy-4-methylthiazol-5(2H)-ylidene]ethyl phosphate + 4-amino-2-methyl-5-(diphosphooxymethyl)pyrimidine + 2 H(+) = thiamine phosphate + CO2 + diphosphate. It carries out the reaction 2-(2-carboxy-4-methylthiazol-5-yl)ethyl phosphate + 4-amino-2-methyl-5-(diphosphooxymethyl)pyrimidine + 2 H(+) = thiamine phosphate + CO2 + diphosphate. The enzyme catalyses 4-methyl-5-(2-phosphooxyethyl)-thiazole + 4-amino-2-methyl-5-(diphosphooxymethyl)pyrimidine + H(+) = thiamine phosphate + diphosphate. Its pathway is cofactor biosynthesis; thiamine diphosphate biosynthesis; thiamine phosphate from 4-amino-2-methyl-5-diphosphomethylpyrimidine and 4-methyl-5-(2-phosphoethyl)-thiazole: step 1/1. Functionally, condenses 4-methyl-5-(beta-hydroxyethyl)thiazole monophosphate (THZ-P) and 2-methyl-4-amino-5-hydroxymethyl pyrimidine pyrophosphate (HMP-PP) to form thiamine monophosphate (TMP). In Mycobacterium leprae (strain TN), this protein is Thiamine-phosphate synthase.